The chain runs to 463 residues: Methionine aminopeptidase 2-2 (463 aa).

The disordered stretch occupies residues 1-107 (MGAKTFEGGD…VPLSQLFPDG (107 aa)). Residues 37 to 53 (EDGDGEFGTDDDDDGDG) show a composition bias toward acidic residues. Residues 69–83 (PKKRKRSKKKKSNKK) are compositionally biased toward basic residues. His-215 lines the substrate pocket. A divalent metal cation-binding residues include Asp-236, Asp-247, and His-316. His-324 is a binding site for substrate. A divalent metal cation-binding residues include Glu-349 and Glu-444.

The protein belongs to the peptidase M24A family. Methionine aminopeptidase eukaryotic type 2 subfamily. The cofactor is Co(2+). Requires Zn(2+) as cofactor. Mn(2+) serves as cofactor. Fe(2+) is required as a cofactor.

It is found in the cytoplasm. The enzyme catalyses Release of N-terminal amino acids, preferentially methionine, from peptides and arylamides.. Its function is as follows. Cotranslationally removes the N-terminal methionine from nascent proteins. The N-terminal methionine is often cleaved when the second residue in the primary sequence is small and uncharged (Met-Ala-, Cys, Gly, Pro, Ser, Thr, or Val). The chain is Methionine aminopeptidase 2-2 from Talaromyces marneffei (strain ATCC 18224 / CBS 334.59 / QM 7333) (Penicillium marneffei).